Consider the following 306-residue polypeptide: Abnormal cell migration protein 21 (306 aa).

2 consecutive TSP type-1 domains span residues 55-102 (PGGW…AISS) and 109-155 (FGSW…DECP). C-linked (Man) tryptophan glycosylation is found at Trp-58 and Trp-61. 3 cysteine pairs are disulfide-bonded: Cys-121-Cys-149, Cys-123-Cys-154, and Cys-134-Cys-139. A helical transmembrane segment spans residues 240–260 (CLPLHFAIPIFCFCILTGFLL).

Post-translationally, glycosylated via C-mannosylation by dpy-19 at Trp-58 and Trp-61.

The protein resides in the membrane. Required for determination of left/right asymmetry in nervous system. Acts together with unc-40 to control an initial left-right asymmetric polarization of the Q neuroblasts. Mig-21 and unc-40 may control the asymmetry in Wnt signaling response by restricting posterior polarization to one of the 2 Q neuroblasts. Involved in left-side QL posterior migration. In right-side QR, unc-40 and mig-21 pathways mutually inhibit each other in posterior migration, allowing anterior QR migration. The protein is Abnormal cell migration protein 21 (mig-21) of Caenorhabditis elegans.